Reading from the N-terminus, the 150-residue chain is Arginine repressor (150 aa).

Belongs to the ArgR family.

The protein resides in the cytoplasm. The protein operates within amino-acid biosynthesis; L-arginine biosynthesis [regulation]. In terms of biological role, regulates arginine biosynthesis genes. This chain is Arginine repressor, found in Clostridium kluyveri (strain NBRC 12016).